The chain runs to 230 residues: Ribonuclease 3 (230 aa).

The RNase III domain occupies 5 to 134 (EALLKSSFAI…FLGALLLDKG (130 aa)). Glu47 contributes to the Mg(2+) binding site. The active site involves Asp51. The Mg(2+) site is built by Asp120 and Glu123. Glu123 is an active-site residue. The DRBM domain maps to 160-229 (DYKTSLQEIL…AENALKALSE (70 aa)).

The protein belongs to the ribonuclease III family. Homodimer. Requires Mg(2+) as cofactor.

The protein resides in the cytoplasm. The enzyme catalyses Endonucleolytic cleavage to 5'-phosphomonoester.. Functionally, digests double-stranded RNA. Involved in the processing of primary rRNA transcript to yield the immediate precursors to the large and small rRNAs (23S and 16S). Processes some mRNAs, and tRNAs when they are encoded in the rRNA operon. Processes pre-crRNA and tracrRNA of type II CRISPR loci if present in the organism. In Streptococcus uberis (strain ATCC BAA-854 / 0140J), this protein is Ribonuclease 3.